The sequence spans 173 residues: Telomerase RNA component interacting RNase (173 aa).

Positions 1 to 12 are enriched in basic and acidic residues; the sequence is MAARGRRAEPPG. The interval 1-119 is disordered; it reads MAARGRRAEP…LSFVGKRRGG (119 aa). Composition is skewed to low complexity over residues 14 to 23 and 43 to 52; these read EAPGPAGSGR and SGSSPVSSGV. The segment covering 64-79 has biased composition (basic and acidic residues); it reads LFKRKMEEEQRQRQEE. A compositionally biased stretch (pro residues) spans 80–90; the sequence is PPPGPQRPDPP. K143 is modified (N6-acetyllysine).

In terms of assembly, part of the telomerase RNA 3' end complex which contains about 488 proteins.

Its function is as follows. Exoribonuclease that is part of the telomerase RNA 3' end processing complex and which has the ability to cleave all four unpaired RNA nucleotides from the 5' end or 3' end with higher efficiency for purine bases. The protein is Telomerase RNA component interacting RNase of Mus musculus (Mouse).